Consider the following 180-residue polypeptide: Large ribosomal subunit protein uL5 (180 aa).

This sequence belongs to the universal ribosomal protein uL5 family. Part of the 50S ribosomal subunit; part of the 5S rRNA/L5/L18/L25 subcomplex. Contacts the 5S rRNA and the P site tRNA. Forms a bridge to the 30S subunit in the 70S ribosome.

In terms of biological role, this is one of the proteins that bind and probably mediate the attachment of the 5S RNA into the large ribosomal subunit, where it forms part of the central protuberance. In the 70S ribosome it contacts protein S13 of the 30S subunit (bridge B1b), connecting the 2 subunits; this bridge is implicated in subunit movement. Contacts the P site tRNA; the 5S rRNA and some of its associated proteins might help stabilize positioning of ribosome-bound tRNAs. The chain is Large ribosomal subunit protein uL5 from Lactococcus lactis subsp. lactis (strain IL1403) (Streptococcus lactis).